Consider the following 585-residue polypeptide: 3-hydroxy-3-methylglutaryl-coenzyme A reductase 1 (585 aa).

2 helical membrane-spanning segments follow: residues 38–58 (LYLT…FLLC) and 77–97 (EIVA…FFGI). Residues 98–169 (DFVQSLVLRP…DEMPVTVMTE (72 aa)) form a linker region. The segment at 170–585 (EDEEIIRSVV…SSKDVSKVSS (416 aa)) is catalytic. The active-site Charge relay system is the Glu264. Asn328 is a glycosylation site (N-linked (GlcNAc...) asparagine). Lys396 functions as the Charge relay system in the catalytic mechanism. Residue Asn441 is glycosylated (N-linked (GlcNAc...) asparagine). The active-site Charge relay system is the Asp472. Catalysis depends on His570, which acts as the Proton donor. An N-linked (GlcNAc...) asparagine glycan is attached at Asn574.

This sequence belongs to the HMG-CoA reductase family.

The protein localises to the endoplasmic reticulum membrane. Its subcellular location is the mitochondrion membrane. The protein resides in the plastid membrane. It catalyses the reaction (R)-mevalonate + 2 NADP(+) + CoA = (3S)-3-hydroxy-3-methylglutaryl-CoA + 2 NADPH + 2 H(+). It functions in the pathway metabolic intermediate biosynthesis; (R)-mevalonate biosynthesis; (R)-mevalonate from acetyl-CoA: step 3/3. Its function is as follows. Catalyzes the synthesis of mevalonate. The specific precursor of all isoprenoid compounds present in plants. The sequence is that of 3-hydroxy-3-methylglutaryl-coenzyme A reductase 1 (HMG1) from Gossypium hirsutum (Upland cotton).